Consider the following 90-residue polypeptide: Bombyxin B-3 (90 aa).

An N-terminal signal peptide occupies residues 1–20 (MMKTTIMFMLVVVISLTYSS). Intrachain disulfides connect C30-C76, C42-C89, and C75-C80. A propeptide spans 49 to 67 (SGAQYAPYFWTRQYLGSRG) (c peptide like).

It belongs to the insulin family. Heterodimer of a B chain and an A chain linked by two disulfide bonds.

The protein resides in the secreted. Brain peptide responsible for activation of prothoracic glands to produce ecdysone in insects. The sequence is that of Bombyxin B-3 (BBXB3) from Bombyx mori (Silk moth).